We begin with the raw amino-acid sequence, 57 residues long: MAKAKGNREKIKLVSSANTGHFYTTEKNKRNMPEKMEIKKFDPVIRQHVMYKEAKIK.

This sequence belongs to the bacterial ribosomal protein bL33 family.

This chain is Large ribosomal subunit protein bL33, found in Shewanella pealeana (strain ATCC 700345 / ANG-SQ1).